Consider the following 178-residue polypeptide: Acireductone dioxygenase (178 aa).

Residues histidine 87, histidine 89, glutamate 93, and histidine 132 each contribute to the Fe(2+) site. The Ni(2+) site is built by histidine 87, histidine 89, glutamate 93, and histidine 132.

It belongs to the acireductone dioxygenase (ARD) family. It depends on Fe(2+) as a cofactor. Requires Ni(2+) as cofactor.

The protein resides in the cytoplasm. It is found in the nucleus. It carries out the reaction 1,2-dihydroxy-5-(methylsulfanyl)pent-1-en-3-one + O2 = 4-methylsulfanyl-2-oxobutanoate + formate + 2 H(+). The catalysed reaction is 1,2-dihydroxy-5-(methylsulfanyl)pent-1-en-3-one + O2 = 3-(methylsulfanyl)propanoate + CO + formate + 2 H(+). It participates in amino-acid biosynthesis; L-methionine biosynthesis via salvage pathway; L-methionine from S-methyl-5-thio-alpha-D-ribose 1-phosphate: step 5/6. Functionally, catalyzes 2 different reactions between oxygen and the acireductone 1,2-dihydroxy-3-keto-5-methylthiopentene (DHK-MTPene) depending upon the metal bound in the active site. Fe-containing acireductone dioxygenase (Fe-ARD) produces formate and 2-keto-4-methylthiobutyrate (KMTB), the alpha-ketoacid precursor of methionine in the methionine recycle pathway. Ni-containing acireductone dioxygenase (Ni-ARD) produces methylthiopropionate, carbon monoxide and formate, and does not lie on the methionine recycle pathway. This Candida albicans (strain SC5314 / ATCC MYA-2876) (Yeast) protein is Acireductone dioxygenase.